Here is a 456-residue protein sequence, read N- to C-terminus: MLPKAFLSRMAELLGEEFPAFLKALTEGKRTYGLRVNTLKLPPEAFQRISPWPLRPIPWCQEGFYYPEEARPGPHPFFYAGLYYIQEPSAQAVGVLLDPKPGERVLDLAAAPGGKTTHLAARMGGKGLLLANEVDGKRVRGLLENVERWGAPLAVTQAPPRALAEAFGTYFHRVLLDAPCSGEGMFRKDREAARHWGPSAPKRMAEVQKALLAQASRLLGPGGVLVYSTCTFAPEENEGVVAHFLKAHPEFRLEDARLHPLFAPGVPEWGEGNPELLKTARLWPHRLEGEGHFLARFRKEGGAWSTPRLERPSPLSQEALRAFRGFLEEAGLTLEGPVLDRAGHLYLLPEGLPTLLGLKAPAPGLYLGKVQKGRFLPARALALAFGATLPWPEGLPRLALTPEDPRALAFATGEGVAWEGEDHPLALVVLKTAAGEFPLDFGKAKRGVLRPVGVGL.

Residues 109-115 (AAAPGGK), Glu133, Arg138, and Asp177 contribute to the S-adenosyl-L-methionine site. The Nucleophile role is filled by Cys230.

This sequence belongs to the class I-like SAM-binding methyltransferase superfamily. RsmB/NOP family.

It is found in the cytoplasm. The enzyme catalyses cytidine(1400) in 16S rRNA + S-adenosyl-L-methionine = 5-methylcytidine(1400) in 16S rRNA + S-adenosyl-L-homocysteine + H(+). It carries out the reaction cytidine(1404) in 16S rRNA + S-adenosyl-L-methionine = 5-methylcytidine(1404) in 16S rRNA + S-adenosyl-L-homocysteine + H(+). The catalysed reaction is cytidine(1407) in 16S rRNA + S-adenosyl-L-methionine = 5-methylcytidine(1407) in 16S rRNA + S-adenosyl-L-homocysteine + H(+). Its function is as follows. Specifically methylates the cytosines at positions 1400 (m5C1400), 1404 (m5C1404) and 1407 (m5C1407) of 16S rRNA. C1400, C1404 and C1407 are methylated in a 30S subunit substrate, but only C1400 and C1404 are methylated when naked 16S rRNA is the substrate. Methylation by RsmF may facilitate growth at temperatures outside the optimal growth temperature. The chain is Ribosomal RNA small subunit methyltransferase F from Thermus thermophilus (strain ATCC 27634 / DSM 579 / HB8).